The following is a 145-amino-acid chain: Basic phospholipase A2 PC14 (145 aa).

The first 21 residues, 1 to 21 (MYPAHLLLLLAVCVSLLGASA), serve as a signal peptide directing secretion. The propeptide occupies 22–27 (IPPLPL). 7 disulfides stabilise this stretch: C38–C98, C54–C144, C56–C72, C71–C125, C78–C118, C87–C111, and C105–C116. 3 residues coordinate Ca(2+): Y55, G57, and G59. H75 is a catalytic residue. Residue D76 participates in Ca(2+) binding. The active site involves D119.

The protein belongs to the phospholipase A2 family. Group I subfamily. D49 sub-subfamily. The cofactor is Ca(2+).

Its subcellular location is the secreted. The enzyme catalyses a 1,2-diacyl-sn-glycero-3-phosphocholine + H2O = a 1-acyl-sn-glycero-3-phosphocholine + a fatty acid + H(+). Its function is as follows. PLA2 catalyzes the calcium-dependent hydrolysis of the 2-acyl groups in 3-sn-phosphoglycerides. This Laticauda laticaudata (Blue-ringed sea krait) protein is Basic phospholipase A2 PC14.